The sequence spans 629 residues: 1-deoxy-D-xylulose-5-phosphate synthase (629 aa).

Thiamine diphosphate contacts are provided by residues H85 and 126-128; that span reads GHS. Position 157 (D157) interacts with Mg(2+). Thiamine diphosphate is bound by residues 158–159, N186, Y293, and E373; that span reads GS. N186 is a Mg(2+) binding site.

The protein belongs to the transketolase family. DXPS subfamily. As to quaternary structure, homodimer. Mg(2+) is required as a cofactor. It depends on thiamine diphosphate as a cofactor.

The catalysed reaction is D-glyceraldehyde 3-phosphate + pyruvate + H(+) = 1-deoxy-D-xylulose 5-phosphate + CO2. The protein operates within metabolic intermediate biosynthesis; 1-deoxy-D-xylulose 5-phosphate biosynthesis; 1-deoxy-D-xylulose 5-phosphate from D-glyceraldehyde 3-phosphate and pyruvate: step 1/1. In terms of biological role, catalyzes the acyloin condensation reaction between C atoms 2 and 3 of pyruvate and glyceraldehyde 3-phosphate to yield 1-deoxy-D-xylulose-5-phosphate (DXP). The sequence is that of 1-deoxy-D-xylulose-5-phosphate synthase from Helicobacter hepaticus (strain ATCC 51449 / 3B1).